Here is a 251-residue protein sequence, read N- to C-terminus: Triosephosphate isomerase (251 aa).

9-11 (NWK) contacts substrate. Histidine 95 acts as the Electrophile in catalysis. Residue glutamate 167 is the Proton acceptor of the active site. Substrate-binding positions include glycine 173, serine 212, and 233 to 234 (GG).

It belongs to the triosephosphate isomerase family. As to quaternary structure, homodimer.

It is found in the cytoplasm. It catalyses the reaction D-glyceraldehyde 3-phosphate = dihydroxyacetone phosphate. It participates in carbohydrate biosynthesis; gluconeogenesis. Its pathway is carbohydrate degradation; glycolysis; D-glyceraldehyde 3-phosphate from glycerone phosphate: step 1/1. Its function is as follows. Involved in the gluconeogenesis. Catalyzes stereospecifically the conversion of dihydroxyacetone phosphate (DHAP) to D-glyceraldehyde-3-phosphate (G3P). The protein is Triosephosphate isomerase of Pseudomonas fluorescens (strain ATCC BAA-477 / NRRL B-23932 / Pf-5).